We begin with the raw amino-acid sequence, 397 residues long: Odorant receptor 59a (397 aa).

At 1-36 (MAEVRVDSLEFFKSHWTAWRYLGVAHFRVENWKNLY) the chain is on the cytoplasmic side. Residues 37–57 (VFYSIVSNLLVTLCYPVHLGI) traverse the membrane as a helical segment. At 58–68 (SLFRNRTITED) the chain is on the extracellular side. N-linked (GlcNAc...) asparagine glycosylation is present at Asn62. The helical transmembrane segment at 69–92 (ILNLTTFATCTACSVKCLLYAYNI) threads the bilayer. At 93-128 (KDVLEMERLLRLLDERVVGPEQRSIYGQVRVQLRNV) the chain is on the cytoplasmic side. The helical transmembrane segment at 129–149 (LYVFIGIYMPCALFAELSFLF) threads the bilayer. Topologically, residues 150 to 179 (KEERGLMYPAWFPFDWLHSTRNYYIANAYQ) are extracellular. The chain crosses the membrane as a helical span at residues 180–200 (IVGISFQLLQNYVSDCFPAVV). The Cytoplasmic segment spans residues 201 to 274 (LCLISSHIKM…IEAFISLPML (74 aa)). Residues 275 to 295 (IQFTVTALNVCIGLAALVFFV) form a helical membrane-spanning segment. The Extracellular portion of the chain corresponds to 296–301 (SEPMAR). A helical membrane pass occupies residues 302–322 (MYFIFYSLAMPLQIFPSCFFG). The Cytoplasmic segment spans residues 323 to 372 (TDNEYWFGRLHYAAFSCNWHTQNRSFKRKMMLFVEQSLKKSTAVAGGMMR). Residues 373–393 (IHLDTFFSTLKGAYSLFTIII) traverse the membrane as a helical segment. Topologically, residues 394–397 (RMRK) are extracellular.

Belongs to the insect chemoreceptor superfamily. Heteromeric odorant receptor channel (TC 1.A.69) family. Or2a subfamily. In terms of assembly, interacts with Orco. Complexes exist early in the endomembrane system in olfactory sensory neurons (OSNs), coupling these complexes to the conserved ciliary trafficking pathway. In terms of tissue distribution, expressed in neurons of the third antennal segment.

It localises to the cell membrane. Functionally, odorant receptor which mediates acceptance or avoidance behavior, depending on its substrates. The odorant receptor repertoire encodes a large collection of odor stimuli that vary widely in identity, intensity, and duration. May form a complex with Orco to form odorant-sensing units, providing sensitive and prolonged odorant signaling and calcium permeability. Involved in the behavioral responses to ethyl acetate, anisole, hexanoic acid, and pyrazines. This Drosophila melanogaster (Fruit fly) protein is Odorant receptor 59a (Or59a).